The chain runs to 317 residues: Transaldolase (317 aa).

The active-site Schiff-base intermediate with substrate is K132.

Belongs to the transaldolase family. Type 1 subfamily. As to quaternary structure, homodimer.

The protein resides in the cytoplasm. The catalysed reaction is D-sedoheptulose 7-phosphate + D-glyceraldehyde 3-phosphate = D-erythrose 4-phosphate + beta-D-fructose 6-phosphate. The protein operates within carbohydrate degradation; pentose phosphate pathway; D-glyceraldehyde 3-phosphate and beta-D-fructose 6-phosphate from D-ribose 5-phosphate and D-xylulose 5-phosphate (non-oxidative stage): step 2/3. Its function is as follows. Transaldolase is important for the balance of metabolites in the pentose-phosphate pathway. In Haemophilus influenzae (strain PittEE), this protein is Transaldolase.